The primary structure comprises 86 residues: UPF0457 protein BCE33L2265 (86 aa).

Belongs to the UPF0457 family.

In Bacillus cereus (strain ZK / E33L), this protein is UPF0457 protein BCE33L2265.